Here is a 197-residue protein sequence, read N- to C-terminus: Transcription factor FapR (197 aa).

This sequence belongs to the FapR family.

Transcriptional factor involved in regulation of membrane lipid biosynthesis by repressing genes involved in fatty acid and phospholipid metabolism. In Bacillus cytotoxicus (strain DSM 22905 / CIP 110041 / 391-98 / NVH 391-98), this protein is Transcription factor FapR.